A 445-amino-acid polypeptide reads, in one-letter code: tRNA-2-methylthio-N(6)-dimethylallyladenosine synthase (445 aa).

The region spanning 2 to 117 (QGLYIKSYGC…LPELIVKARK (116 aa)) is the MTTase N-terminal domain. [4Fe-4S] cluster-binding residues include C11, C47, C80, C157, C161, and C164. The region spanning 143–374 (KNQKVSAFIS…QELVHKQQLE (232 aa)) is the Radical SAM core domain. Residues 377–441 (KKMIGETHPV…KNHLTGIIPN (65 aa)) enclose the TRAM domain.

This sequence belongs to the methylthiotransferase family. MiaB subfamily. Monomer. The cofactor is [4Fe-4S] cluster.

It is found in the cytoplasm. It carries out the reaction N(6)-dimethylallyladenosine(37) in tRNA + (sulfur carrier)-SH + AH2 + 2 S-adenosyl-L-methionine = 2-methylsulfanyl-N(6)-dimethylallyladenosine(37) in tRNA + (sulfur carrier)-H + 5'-deoxyadenosine + L-methionine + A + S-adenosyl-L-homocysteine + 2 H(+). In terms of biological role, catalyzes the methylthiolation of N6-(dimethylallyl)adenosine (i(6)A), leading to the formation of 2-methylthio-N6-(dimethylallyl)adenosine (ms(2)i(6)A) at position 37 in tRNAs that read codons beginning with uridine. This Ehrlichia ruminantium (strain Welgevonden) protein is tRNA-2-methylthio-N(6)-dimethylallyladenosine synthase.